The primary structure comprises 395 residues: Leukosialin (395 aa).

The signal sequence occupies residues Met1–Pro19. Over Asp20 to Gly248 the chain is Extracellular. Residues Met27–Val56 show a composition bias toward polar residues. The segment at Met27–Glu245 is disordered. The segment covering Ser73 to Ser88 has biased composition (low complexity). Composition is skewed to polar residues over residues Ala89–Ser111 and Thr145–Gly154. Over residues Thr155–Ser166 the composition is skewed to low complexity. N-linked (GlcNAc...) asparagine glycosylation occurs at Asn167. The segment covering Asn167–Pro196 has biased composition (polar residues). Residues Ala205–Ser241 show a composition bias toward low complexity. A helical membrane pass occupies residues Met249 to Trp271. The interval Arg272–Arg302 is required for interaction with EZR, MSN and RDX and for co-localization to microvilli. The Cytoplasmic portion of the chain corresponds to Arg272–Leu395. The short motif at Lys276 to Arg290 is the Nuclear localization signal element. Phosphoserine occurs at positions 285 and 328. The tract at residues Val303 to Leu395 is disordered. The span at Gly327–Phe338 shows a compositional bias: polar residues. The residue at position 333 (Thr333) is a Phosphothreonine. Phosphoserine is present on residues Ser339 and Ser343. At Ser347 the chain carries Phosphoserine; by PKC/PRKCQ. Ser371 carries the phosphoserine modification. The residue at position 378 (Thr378) is a Phosphothreonine. Residues Gln385–Leu395 show a composition bias toward basic and acidic residues.

Interacts with SIGLEC1. In terms of assembly, interacts with isoform 2 of HIPK2. Interacts with CTNNB1. Interacts with RDX (via FERM domain). Interacts with EZR. Interacts with MSN. In terms of processing, phosphorylation at Ser-347 is regulated by chemokines, requires its association with ERM proteins (EZR, RDX and MSN) and is essential for its function in the regulation of T-cell trafficking to lymph nodes. Post-translationally, has a high content of sialic acid and O-linked carbohydrate structures. Cleavage by CTSG releases its extracellular domain and triggers its intramembrane proteolysis by gamma-secretase releasing the CD43 cytoplasmic tail chain (CD43-ct) which translocates to the nucleus. In terms of processing, sumoylated. As to expression, cell surface of thymocytes, T-lymphocytes, neutrophils, plasma cells and myelomas.

It is found in the membrane. The protein resides in the cell projection. It localises to the microvillus. Its subcellular location is the uropodium. The protein localises to the nucleus. It is found in the PML body. Predominant cell surface sialoprotein of leukocytes which regulates multiple T-cell functions, including T-cell activation, proliferation, differentiation, trafficking and migration. Positively regulates T-cell trafficking to lymph-nodes via its association with ERM proteins (EZR, RDX and MSN). Negatively regulates Th2 cell differentiation and predisposes the differentiation of T-cells towards a Th1 lineage commitment. Promotes the expression of IFN-gamma by T-cells during T-cell receptor (TCR) activation of naive cells and induces the expression of IFN-gamma by CD4(+) T-cells and to a lesser extent by CD8(+) T-cells. Plays a role in preparing T-cells for cytokine sensing and differentiation into effector cells by inducing the expression of cytokine receptors IFNGR and IL4R, promoting IFNGR and IL4R signaling and by mediating the clustering of IFNGR with TCR. Acts as a major E-selectin ligand responsible for Th17 cell rolling on activated vasculature and recruitment during inflammation. Mediates Th17 cells, but not Th1 cells, adhesion to E-selectin. Acts as a T-cell counter-receptor for SIGLEC1. In terms of biological role, protects cells from apoptotic signals, promoting cell survival. The chain is Leukosialin (Spn) from Mus musculus (Mouse).